The chain runs to 254 residues: Indole-3-glycerol phosphate synthase (254 aa).

The protein belongs to the TrpC family.

It catalyses the reaction 1-(2-carboxyphenylamino)-1-deoxy-D-ribulose 5-phosphate + H(+) = (1S,2R)-1-C-(indol-3-yl)glycerol 3-phosphate + CO2 + H2O. Its pathway is amino-acid biosynthesis; L-tryptophan biosynthesis; L-tryptophan from chorismate: step 4/5. This is Indole-3-glycerol phosphate synthase from Methanopyrus kandleri (strain AV19 / DSM 6324 / JCM 9639 / NBRC 100938).